Here is a 385-residue protein sequence, read N- to C-terminus: Chaperone protein DnaJ (385 aa).

The J domain maps to 3–68 (DYYEILGVTR…QKRAAYDRFG (66 aa)). A CR-type zinc finger spans residues 135-213 (GAEVEITVPA…CHGHGQVRRE (79 aa)). Zn(2+) contacts are provided by Cys148, Cys151, Cys165, Cys168, Cys187, Cys190, Cys201, and Cys204. CXXCXGXG motif repeat units lie at residues 148–155 (CEVCEGSG), 165–172 (CGTCGGAG), 187–194 (CPRCGGSG), and 201–208 (CSNCHGHG).

It belongs to the DnaJ family. As to quaternary structure, homodimer. Zn(2+) is required as a cofactor.

The protein resides in the cytoplasm. Its function is as follows. Participates actively in the response to hyperosmotic and heat shock by preventing the aggregation of stress-denatured proteins and by disaggregating proteins, also in an autonomous, DnaK-independent fashion. Unfolded proteins bind initially to DnaJ; upon interaction with the DnaJ-bound protein, DnaK hydrolyzes its bound ATP, resulting in the formation of a stable complex. GrpE releases ADP from DnaK; ATP binding to DnaK triggers the release of the substrate protein, thus completing the reaction cycle. Several rounds of ATP-dependent interactions between DnaJ, DnaK and GrpE are required for fully efficient folding. Also involved, together with DnaK and GrpE, in the DNA replication of plasmids through activation of initiation proteins. The polypeptide is Chaperone protein DnaJ (Caulobacter vibrioides (strain ATCC 19089 / CIP 103742 / CB 15) (Caulobacter crescentus)).